The primary structure comprises 262 residues: Late embryogenesis abundant protein 31 (262 aa).

Positions 6–10 (QPKRP) match the Nuclear localization signal (NLS) motif. 3 SMP domains span residues 14-68 (VTYG…ANKR), 136-192 (ITIG…NHNA), and 201-260 (IKLI…NERA).

It belongs to the LEA type SMP family. In terms of tissue distribution, embryo specific, only in dry mature seeds.

It localises to the nucleus. The protein resides in the nucleolus. It is found in the cytoplasm. In terms of biological role, LEA proteins are late embryonic proteins abundant in higher plant seed embryos. The function of those proteins is not known. Promotes germination rate. Enhances cation toxicity (e.g. lithium ion) and osmotic stress (e.g. NaCl and sorbitol) tolerance during germination and in seedlings. The protein is Late embryogenesis abundant protein 31 of Arabidopsis thaliana (Mouse-ear cress).